Reading from the N-terminus, the 751-residue chain is Semaphorin-3C (751 aa).

The N-terminal stretch at 1-21 (MAVLALHAVFGIFIYFSSVKG) is a signal peptide. In terms of domain architecture, Sema spans 28–511 (RVFLTFNELQ…SEEGVTQVPL (484 aa)). N81 carries N-linked (GlcNAc...) asparagine glycosylation. A disulfide bridge connects residues C101 and C112. Residue N123 is glycosylated (N-linked (GlcNAc...) asparagine). 3 disulfide bridges follow: C130–C139, C266–C378, and C290–C338. Residue N268 is glycosylated (N-linked (GlcNAc...) asparagine). Residue N465 is glycosylated (N-linked (GlcNAc...) asparagine). C514 and C532 form a disulfide bridge. One can recognise an Ig-like C2-type domain in the interval 571-655 (AYRNAAETVQ…TENNFKQTLA (85 aa)). 2 N-linked (GlcNAc...) asparagine glycosylation sites follow: N585 and N586. C643 and C709 are oxidised to a cystine. A compositionally biased stretch (basic and acidic residues) spans 712 to 731 (SRQQGQRREEPQKMRGDYSK). The disordered stretch occupies residues 712–751 (SRQQGQRREEPQKMRGDYSKLKALINSRKSRNRRNQLPAS).

This sequence belongs to the semaphorin family. Collapsin-1, -2, -3, and -5 bind to overlapping but distinct axon tracts.

It is found in the secreted. Induces the collapse and paralysis of neuronal growth cones. Could potentially act as repulsive cues toward specific neuronal populations. Binds to neuropilin. This is Semaphorin-3C (SEMA3C) from Gallus gallus (Chicken).